A 162-amino-acid polypeptide reads, in one-letter code: Phosphopantetheine adenylyltransferase (162 aa).

Serine 11 lines the substrate pocket. ATP-binding positions include 11–12 (SF) and histidine 19. Lysine 43, valine 76, and arginine 90 together coordinate substrate. Residues 91 to 93 (GLR), glutamate 101, and 126 to 132 (HLYISSS) each bind ATP.

It belongs to the bacterial CoaD family. In terms of assembly, homohexamer. It depends on Mg(2+) as a cofactor.

Its subcellular location is the cytoplasm. The catalysed reaction is (R)-4'-phosphopantetheine + ATP + H(+) = 3'-dephospho-CoA + diphosphate. It participates in cofactor biosynthesis; coenzyme A biosynthesis; CoA from (R)-pantothenate: step 4/5. In terms of biological role, reversibly transfers an adenylyl group from ATP to 4'-phosphopantetheine, yielding dephospho-CoA (dPCoA) and pyrophosphate. The polypeptide is Phosphopantetheine adenylyltransferase (Streptococcus pneumoniae (strain JJA)).